A 149-amino-acid chain; its full sequence is Putative mediator of RNA polymerase II transcription subunit 22 (149 aa).

The protein belongs to the Mediator complex subunit 22 family. In terms of assembly, component of the Mediator complex.

The protein localises to the nucleus. Its function is as follows. Component of the Mediator complex, a coactivator involved in the regulated transcription of nearly all RNA polymerase II-dependent genes. Mediator functions as a bridge to convey information from gene-specific regulatory proteins to the basal RNA polymerase II transcription machinery. Mediator is recruited to promoters by direct interactions with regulatory proteins and serves as a scaffold for the assembly of a functional preinitiation complex with RNA polymerase II and the general transcription factors. The protein is Putative mediator of RNA polymerase II transcription subunit 22 (med22) of Dictyostelium discoideum (Social amoeba).